A 162-amino-acid chain; its full sequence is Peptide methionine sulfoxide reductase MsrA (162 aa).

C10 is an active-site residue.

Belongs to the MsrA Met sulfoxide reductase family.

It carries out the reaction L-methionyl-[protein] + [thioredoxin]-disulfide + H2O = L-methionyl-(S)-S-oxide-[protein] + [thioredoxin]-dithiol. The catalysed reaction is [thioredoxin]-disulfide + L-methionine + H2O = L-methionine (S)-S-oxide + [thioredoxin]-dithiol. Functionally, has an important function as a repair enzyme for proteins that have been inactivated by oxidation. Catalyzes the reversible oxidation-reduction of methionine sulfoxide in proteins to methionine. This Clostridium acetobutylicum (strain ATCC 824 / DSM 792 / JCM 1419 / IAM 19013 / LMG 5710 / NBRC 13948 / NRRL B-527 / VKM B-1787 / 2291 / W) protein is Peptide methionine sulfoxide reductase MsrA.